The following is a 233-amino-acid chain: Probable RNA 2'-phosphotransferase (233 aa).

It belongs to the KptA/TPT1 family.

In terms of biological role, removes the 2'-phosphate from RNA via an intermediate in which the phosphate is ADP-ribosylated by NAD followed by a presumed transesterification to release the RNA and generate ADP-ribose 1''-2''-cyclic phosphate (APPR&gt;P). May function as an ADP-ribosylase. This chain is Probable RNA 2'-phosphotransferase, found in Hyperthermus butylicus (strain DSM 5456 / JCM 9403 / PLM1-5).